The primary structure comprises 339 residues: tRNA N6-adenosine threonylcarbamoyltransferase (339 aa).

Fe cation contacts are provided by H111 and H115. Substrate-binding positions include L134 to G138, D167, G180, and N272. D300 is a binding site for Fe cation.

The protein belongs to the KAE1 / TsaD family. It depends on Fe(2+) as a cofactor.

The protein localises to the cytoplasm. It carries out the reaction L-threonylcarbamoyladenylate + adenosine(37) in tRNA = N(6)-L-threonylcarbamoyladenosine(37) in tRNA + AMP + H(+). Its function is as follows. Required for the formation of a threonylcarbamoyl group on adenosine at position 37 (t(6)A37) in tRNAs that read codons beginning with adenine. Is involved in the transfer of the threonylcarbamoyl moiety of threonylcarbamoyl-AMP (TC-AMP) to the N6 group of A37, together with TsaE and TsaB. TsaD likely plays a direct catalytic role in this reaction. This chain is tRNA N6-adenosine threonylcarbamoyltransferase, found in Vibrio cholerae serotype O1 (strain ATCC 39541 / Classical Ogawa 395 / O395).